We begin with the raw amino-acid sequence, 682 residues long: DNA-directed RNA polymerase subunit beta' (682 aa).

Residues C69, C71, C87, and C90 each coordinate Zn(2+). Residues D489, D491, and D493 each coordinate Mg(2+).

The protein belongs to the RNA polymerase beta' chain family. RpoC1 subfamily. As to quaternary structure, in plastids the minimal PEP RNA polymerase catalytic core is composed of four subunits: alpha, beta, beta', and beta''. When a (nuclear-encoded) sigma factor is associated with the core the holoenzyme is formed, which can initiate transcription. Requires Mg(2+) as cofactor. The cofactor is Zn(2+).

The protein localises to the plastid. The protein resides in the chloroplast. It carries out the reaction RNA(n) + a ribonucleoside 5'-triphosphate = RNA(n+1) + diphosphate. In terms of biological role, DNA-dependent RNA polymerase catalyzes the transcription of DNA into RNA using the four ribonucleoside triphosphates as substrates. The chain is DNA-directed RNA polymerase subunit beta' from Vitis vinifera (Grape).